A 1755-amino-acid polypeptide reads, in one-letter code: Transposon Ty1-DR5 Gag-Pol polyprotein (1755 aa).

Polar residues-rich tracts occupy residues 1–10, 48–60, and 127–152; these read MESQQLSNYP, TKAN…TPAS, and QSQF…GNTF. Disordered regions lie at residues 1 to 93, 126 to 173, and 352 to 421; these read MESQ…MMTQ, PQSQ…RPPP, and GSRN…SKST. Over residues 153-165 the composition is skewed to low complexity; sequence TDSSSADSDMTST. Positions 299-401 are RNA-binding; that stretch reads NNGIHINNKV…NSKSKTARAH (103 aa). Residues 402 to 418 show a composition bias toward low complexity; it reads NVSTSNNSPSTDNDSIS. D461 acts as the For protease activity; shared with dimeric partner in catalysis. Residues 583 to 640 form an integrase-type zinc finger-like region; it reads NVHTSESTRKYPYPFIHRMLAHANAQTIRYSLKNNTITYFNESDVDWSSAIDYQCPDC. One can recognise an Integrase catalytic domain in the interval 660 to 835; that stretch reads NSYEPFQYLH…AGLDISTLLP (176 aa). Mg(2+) is bound by residues D671 and D736. Disordered stretches follow at residues 956–1087, 1092–1111, and 1130–1187; these read SKAV…ETEK, RSPS…NIVP, and DLPL…DNET. A compositionally biased stretch (low complexity) spans 960–969; it reads SPTDSTPPST. Positions 1005–1015 are enriched in polar residues; it reads STPQISNIEST. Basic and acidic residues predominate over residues 1038–1053; sequence ESSHASKSKDFRHSDS. Composition is skewed to polar residues over residues 1054–1082 and 1101–1111; these read YSEN…QISD and PENNSSHNIVP. Residues 1178–1212 carry the Bipartite nuclear localization signal motif; it reads KKRSLEDNETEIKVSRDTWNTKNMRSLEPPRSKKR. Residues 1338-1476 enclose the Reverse transcriptase Ty1/copia-type domain; sequence NNYYITQLDI…DILGLEIKYQ (139 aa). The Mg(2+) site is built by D1346, D1427, D1428, D1610, E1652, and D1685. One can recognise an RNase H Ty1/copia-type domain in the interval 1610 to 1752; it reads DASYGNQPYY…IKTFKLLTNK (143 aa).

In terms of assembly, the capsid protein forms a homotrimer, from which the VLPs are assembled. The protease is a homodimer, whose active site consists of two apposed aspartic acid residues. Initially, virus-like particles (VLPs) are composed of the structural unprocessed proteins Gag and Gag-Pol, and also contain the host initiator methionine tRNA (tRNA(i)-Met) which serves as a primer for minus-strand DNA synthesis, and a dimer of genomic Ty RNA. Processing of the polyproteins occurs within the particle and proceeds by an ordered pathway, called maturation. First, the protease (PR) is released by autocatalytic cleavage of the Gag-Pol polyprotein yielding capsid protein p45 and a Pol-p154 precursor protein. This cleavage is a prerequisite for subsequent processing of Pol-p154 at the remaining sites to release the mature structural and catalytic proteins. Maturation takes place prior to the RT reaction and is required to produce transposition-competent VLPs.

The protein localises to the cytoplasm. It is found in the nucleus. The catalysed reaction is DNA(n) + a 2'-deoxyribonucleoside 5'-triphosphate = DNA(n+1) + diphosphate. The enzyme catalyses Endonucleolytic cleavage to 5'-phosphomonoester.. Its function is as follows. Capsid protein (CA) is the structural component of the virus-like particle (VLP), forming the shell that encapsulates the retrotransposons dimeric RNA genome. The particles are assembled from trimer-clustered units and there are holes in the capsid shells that allow for the diffusion of macromolecules. CA also has nucleocapsid-like chaperone activity, promoting primer tRNA(i)-Met annealing to the multipartite primer-binding site (PBS), dimerization of Ty1 RNA and initiation of reverse transcription. In terms of biological role, the aspartyl protease (PR) mediates the proteolytic cleavages of the Gag and Gag-Pol polyproteins after assembly of the VLP. Reverse transcriptase/ribonuclease H (RT) is a multifunctional enzyme that catalyzes the conversion of the retro-elements RNA genome into dsDNA within the VLP. The enzyme displays a DNA polymerase activity that can copy either DNA or RNA templates, and a ribonuclease H (RNase H) activity that cleaves the RNA strand of RNA-DNA heteroduplexes during plus-strand synthesis and hydrolyzes RNA primers. The conversion leads to a linear dsDNA copy of the retrotransposon that includes long terminal repeats (LTRs) at both ends. Functionally, integrase (IN) targets the VLP to the nucleus, where a subparticle preintegration complex (PIC) containing at least integrase and the newly synthesized dsDNA copy of the retrotransposon must transit the nuclear membrane. Once in the nucleus, integrase performs the integration of the dsDNA into the host genome. The sequence is that of Transposon Ty1-DR5 Gag-Pol polyprotein (TY1B-DR5) from Saccharomyces cerevisiae (strain ATCC 204508 / S288c) (Baker's yeast).